The following is a 418-amino-acid chain: Putative competence-damage inducible protein (418 aa).

This sequence belongs to the CinA family.

The polypeptide is Putative competence-damage inducible protein (Streptococcus pneumoniae (strain CGSP14)).